The following is a 664-amino-acid chain: tRNA (carboxymethyluridine(34)-5-O)-methyltransferase ALKBH8 (664 aa).

Residues 43 to 120 enclose the RRM domain; it reads QSLVVANGGL…QKIILYLNFV (78 aa). The Fe2OG dioxygenase domain occupies 220–337; that stretch reads KPDQMTINQY…RTSFTFRKVR (118 aa). A 2-oxoglutarate-binding site is contributed by 227–229; that stretch reads NQY. Fe cation-binding residues include His238 and Asp240. Residue His242 participates in Zn(2+) binding. Residue His292 coordinates Fe cation. 2-oxoglutarate is bound by residues Arg328 and Arg334. Cys341, Cys343, and Cys349 together coordinate Zn(2+). The tract at residues 411 to 664 is methyltransferase domain; the sequence is ADIGCGNGKY…GNWCVILQKA (254 aa). Residues 516 to 575 form a disordered region; it reads KYLKGNRNSQGKKEEMNSDTSVQRSLVEQMPDMGSRDSASSVPRINDSQEGGCNSRQVSN. Residues 552 to 575 show a composition bias toward polar residues; sequence DSASSVPRINDSQEGGCNSRQVSN.

Belongs to the alkB family. Interacts with TRMT112. It depends on Fe(2+) as a cofactor.

The protein localises to the cytoplasm. It is found in the nucleus. It catalyses the reaction 5-(carboxymethyl)uridine(34) in tRNA + S-adenosyl-L-methionine = 5-(2-methoxy-2-oxoethyl)uridine(34) in tRNA + S-adenosyl-L-homocysteine. Catalyzes the methylation of 5-carboxymethyl uridine to 5-methylcarboxymethyl uridine at the wobble position of the anticodon loop in tRNA via its methyltransferase domain. Catalyzes the last step in the formation of 5-methylcarboxymethyl uridine at the wobble position of the anticodon loop in target tRNA. Has a preference for tRNA(Arg) and tRNA(Glu), and does not bind tRNA(Lys). Binds tRNA and catalyzes the iron and alpha-ketoglutarate dependent hydroxylation of 5-methylcarboxymethyl uridine at the wobble position of the anticodon loop in tRNA via its dioxygenase domain, giving rise to 5-(S)-methoxycarbonylhydroxymethyluridine; has a preference for tRNA(Gly). Required for normal survival after DNA damage. May inhibit apoptosis and promote cell survival and angiogenesis. In Macaca fascicularis (Crab-eating macaque), this protein is tRNA (carboxymethyluridine(34)-5-O)-methyltransferase ALKBH8 (ALKBH8).